Reading from the N-terminus, the 141-residue chain is Protein E6 (141 aa).

2 zinc fingers span residues 27–64 (CRFCNRFLAYIELVAFDLKGLQLIWTEEDFVFACCSSC) and 101–137 (CKFCLKKLDLLEKLDTCYRHQQFHKVRRNWKGLCRHC).

This sequence belongs to the papillomaviridae E6 protein family. As to quaternary structure, forms homodimers. Interacts with ubiquitin-protein ligase UBE3A/E6-AP; this interaction stimulates UBE3A ubiquitin activity. Interacts with host BAK1.

The protein resides in the host cytoplasm. It is found in the host nucleus. Plays a major role in the induction and maintenance of cellular transformation. E6 associates with host UBE3A/E6-AP ubiquitin-protein ligase and modulates its activity. Protects host keratinocytes from apoptosis by mediating the degradation of host BAK1. May also inhibit host immune response. The chain is Protein E6 from Human papillomavirus 17.